Here is a 128-residue protein sequence, read N- to C-terminus: Large ribosomal subunit protein bL12 (128 aa).

The interval 97 to 128 (GAPSTLKEGVSKEDAEEAKKQLTEAGATVEVK) is disordered. The span at 105–118 (GVSKEDAEEAKKQL) shows a compositional bias: basic and acidic residues.

The protein belongs to the bacterial ribosomal protein bL12 family. In terms of assembly, homodimer. Part of the ribosomal stalk of the 50S ribosomal subunit. Forms a multimeric L10(L12)X complex, where L10 forms an elongated spine to which 2 to 4 L12 dimers bind in a sequential fashion. Binds GTP-bound translation factors.

Functionally, forms part of the ribosomal stalk which helps the ribosome interact with GTP-bound translation factors. Is thus essential for accurate translation. The chain is Large ribosomal subunit protein bL12 from Lawsonia intracellularis (strain PHE/MN1-00).